We begin with the raw amino-acid sequence, 115 residues long: Sericin-1 (115 aa).

Residues 1–115 (GSSGSSGSSG…GGSSSTSSSN (115 aa)) form a disordered region.

As to expression, produced exclusively in the middle (MSG) section of silk glands.

The protein localises to the secreted. Provides the silk fibroin thread with a sticky coating. Acts as a cement by sticking silk threads together. In Galleria mellonella (Greater wax moth), this protein is Sericin-1 (SER1).